We begin with the raw amino-acid sequence, 579 residues long: Deleted in azoospermia protein 4 (579 aa).

The span at 1-10 shows a compositional bias: polar residues; it reads MSAANPETPN. The segment at 1–27 is disordered; that stretch reads MSAANPETPNSTISREASTQSSSAAAS. Positions 11 to 27 are enriched in low complexity; it reads STISREASTQSSSAAAS. An RRM 1 domain is found at 40–115; the sequence is NTVFVGGIDA…KKLKLGPAIR (76 aa). Over residues 163–175 the composition is skewed to polar residues; it reads QHVQSAANPETPN. The disordered stretch occupies residues 163–192; that stretch reads QHVQSAANPETPNSTISREASTQSSSAAAS. Low complexity predominate over residues 176–192; sequence STISREASTQSSSAAAS. Positions 205 to 280 constitute an RRM 2 domain; the sequence is NTVFVGGIDA…KKLKLGPAIR (76 aa). 9 consecutive DAZ domains span residues 332–355, 356–379, 380–403, 404–427, 428–451, 452–475, 476–499, 500–523, and 524–547; these read AYSA…YNYQ, EYPT…YNYQ, PFPA…YNYQ, and AFPA…YNYQ.

This sequence belongs to the RRM DAZ family. In terms of assembly, forms a heterodimer with BOLL and DAZL. Interacts with PUM2, DAZAP1, DAZAP2, DZIP1 and DZIP3. Testis-specific. Expression restricted to premeiotic germ cells, particularly in spermatogonia (at protein level).

It is found in the cytoplasm. It localises to the nucleus. Functionally, RNA-binding protein that plays an essential role in spermatogenesis. May act by binding to the 3'-UTR of mRNAs and regulating their translation. The polypeptide is Deleted in azoospermia protein 4 (DAZ4) (Homo sapiens (Human)).